Reading from the N-terminus, the 468-residue chain is 3-isopropylmalate dehydratase large subunit (468 aa).

3 residues coordinate [4Fe-4S] cluster: C347, C407, and C410.

The protein belongs to the aconitase/IPM isomerase family. LeuC type 1 subfamily. Heterodimer of LeuC and LeuD. [4Fe-4S] cluster serves as cofactor.

The enzyme catalyses (2R,3S)-3-isopropylmalate = (2S)-2-isopropylmalate. Its pathway is amino-acid biosynthesis; L-leucine biosynthesis; L-leucine from 3-methyl-2-oxobutanoate: step 2/4. In terms of biological role, catalyzes the isomerization between 2-isopropylmalate and 3-isopropylmalate, via the formation of 2-isopropylmaleate. The sequence is that of 3-isopropylmalate dehydratase large subunit from Campylobacter jejuni (strain RM1221).